The following is a 519-amino-acid chain: Methionine--tRNA ligase (519 aa).

The 'HIGH' region motif lies at 11–21; sequence AYPNAAPHVGH. The short motif at 299–303 is the 'KMSKS' region element; sequence KMSKS. Position 302 (lysine 302) interacts with ATP. Residues 500 to 519 are disordered; the sequence is LPPPTGVFPRYQPPQPPEGK.

It belongs to the class-I aminoacyl-tRNA synthetase family. MetG type 2B subfamily. In terms of assembly, monomer.

It localises to the cytoplasm. It carries out the reaction tRNA(Met) + L-methionine + ATP = L-methionyl-tRNA(Met) + AMP + diphosphate. Is required not only for elongation of protein synthesis but also for the initiation of all mRNA translation through initiator tRNA(fMet) aminoacylation. The protein is Methionine--tRNA ligase (metG) of Mycobacterium tuberculosis (strain CDC 1551 / Oshkosh).